The primary structure comprises 330 residues: Inactive hydroxysteroid dehydrogenase-like protein 1 (330 aa).

Ala2 bears the N-acetylalanine mark. A required for mitochondria translocation region spans residues 2–82 (AAVDSFYLLY…SGATDGIGKA (81 aa)). Residues 74 to 80 (GATDGIG), Asp125, and Lys222 contribute to the NADP(+) site.

It belongs to the short-chain dehydrogenases/reductases (SDR) family. 17-beta-HSD 3 subfamily. Interacts with STYXL1.

The protein resides in the mitochondrion. The protein is Inactive hydroxysteroid dehydrogenase-like protein 1 (Hsdl1) of Rattus norvegicus (Rat).